The sequence spans 164 residues: Phosphopantetheine adenylyltransferase (164 aa).

Substrate is bound at residue Ser-9. ATP-binding positions include 9 to 10 (SF) and His-17. Residues Lys-41, Leu-73, and Lys-87 each contribute to the substrate site. ATP is bound by residues 88–90 (GLR), Glu-98, and 122–128 (YSYLSSS).

Belongs to the bacterial CoaD family. As to quaternary structure, homohexamer. Requires Mg(2+) as cofactor.

The protein resides in the cytoplasm. The catalysed reaction is (R)-4'-phosphopantetheine + ATP + H(+) = 3'-dephospho-CoA + diphosphate. The protein operates within cofactor biosynthesis; coenzyme A biosynthesis; CoA from (R)-pantothenate: step 4/5. In terms of biological role, reversibly transfers an adenylyl group from ATP to 4'-phosphopantetheine, yielding dephospho-CoA (dPCoA) and pyrophosphate. This chain is Phosphopantetheine adenylyltransferase, found in Rhodococcus jostii (strain RHA1).